Here is a 550-residue protein sequence, read N- to C-terminus: Metal transporter Nramp3 (550 aa).

Residues methionine 1–proline 26 show a composition bias toward polar residues. A disordered region spans residues methionine 1–leucine 30. 12 helical membrane-spanning segments follow: residues leucine 50–phenylalanine 70, glutamate 83–alanine 103, phenylalanine 127–glycine 147, isoleucine 158–glutamine 178, leucine 185–glycine 205, isoleucine 233–leucine 253, alanine 276–valine 296, leucine 333–glycine 353, tryptophan 368–glycine 390, leucine 397–leucine 417, isoleucine 435–isoleucine 455, and valine 473–leucine 493. Residues glycine 523 to aspartate 550 form a disordered region. Polar residues predominate over residues serine 536–aspartate 550.

The protein belongs to the NRAMP (TC 2.A.55) family.

It localises to the membrane. Probable metal transporter. The polypeptide is Metal transporter Nramp3 (NRAMP3) (Oryza sativa subsp. japonica (Rice)).